The following is a 260-amino-acid chain: Type III pantothenate kinase (260 aa).

An ATP-binding site is contributed by aspartate 6 to valine 13. Glycine 108–arginine 111 serves as a coordination point for substrate. The Proton acceptor role is filled by aspartate 110. Aspartate 130 serves as a coordination point for K(+). Threonine 133 serves as a coordination point for ATP. Substrate is bound at residue threonine 185.

Belongs to the type III pantothenate kinase family. As to quaternary structure, homodimer. NH4(+) serves as cofactor. It depends on K(+) as a cofactor.

It is found in the cytoplasm. It carries out the reaction (R)-pantothenate + ATP = (R)-4'-phosphopantothenate + ADP + H(+). It participates in cofactor biosynthesis; coenzyme A biosynthesis; CoA from (R)-pantothenate: step 1/5. Catalyzes the phosphorylation of pantothenate (Pan), the first step in CoA biosynthesis. The protein is Type III pantothenate kinase of Paramagnetospirillum magneticum (strain ATCC 700264 / AMB-1) (Magnetospirillum magneticum).